Here is a 455-residue protein sequence, read N- to C-terminus: Bifunctional protein GlmU (455 aa).

Residues 1–226 (MGLSVVILAA…EFEILGVNDR (226 aa)) form a pyrophosphorylase region. UDP-N-acetyl-alpha-D-glucosamine contacts are provided by residues 8 to 11 (LAAG), Lys22, Gln73, 78 to 79 (GT), 99 to 101 (YGD), Gly136, Glu151, Asn166, and Asn224. Position 101 (Asp101) interacts with Mg(2+). Asn224 serves as a coordination point for Mg(2+). Positions 227–247 (TQLASLERVWQRNVAEKIMAK) are linker. The N-acetyltransferase stretch occupies residues 248–455 (GVSIADPNRF…WQRSVKKTDK (208 aa)). 2 residues coordinate UDP-N-acetyl-alpha-D-glucosamine: Arg330 and Lys348. His360 serves as the catalytic Proton acceptor. The UDP-N-acetyl-alpha-D-glucosamine site is built by Tyr363 and Asn374. Residues Ala377, 383–384 (NY), Ser402, Ala420, and Arg437 each bind acetyl-CoA.

The protein in the N-terminal section; belongs to the N-acetylglucosamine-1-phosphate uridyltransferase family. In the C-terminal section; belongs to the transferase hexapeptide repeat family. As to quaternary structure, homotrimer. Mg(2+) is required as a cofactor.

It localises to the cytoplasm. The enzyme catalyses alpha-D-glucosamine 1-phosphate + acetyl-CoA = N-acetyl-alpha-D-glucosamine 1-phosphate + CoA + H(+). It carries out the reaction N-acetyl-alpha-D-glucosamine 1-phosphate + UTP + H(+) = UDP-N-acetyl-alpha-D-glucosamine + diphosphate. It functions in the pathway nucleotide-sugar biosynthesis; UDP-N-acetyl-alpha-D-glucosamine biosynthesis; N-acetyl-alpha-D-glucosamine 1-phosphate from alpha-D-glucosamine 6-phosphate (route II): step 2/2. The protein operates within nucleotide-sugar biosynthesis; UDP-N-acetyl-alpha-D-glucosamine biosynthesis; UDP-N-acetyl-alpha-D-glucosamine from N-acetyl-alpha-D-glucosamine 1-phosphate: step 1/1. Its pathway is bacterial outer membrane biogenesis; LPS lipid A biosynthesis. Its function is as follows. Catalyzes the last two sequential reactions in the de novo biosynthetic pathway for UDP-N-acetylglucosamine (UDP-GlcNAc). The C-terminal domain catalyzes the transfer of acetyl group from acetyl coenzyme A to glucosamine-1-phosphate (GlcN-1-P) to produce N-acetylglucosamine-1-phosphate (GlcNAc-1-P), which is converted into UDP-GlcNAc by the transfer of uridine 5-monophosphate (from uridine 5-triphosphate), a reaction catalyzed by the N-terminal domain. The polypeptide is Bifunctional protein GlmU (Francisella tularensis subsp. tularensis (strain SCHU S4 / Schu 4)).